Consider the following 282-residue polypeptide: Nucleotide-binding protein XAC2976 (282 aa).

5-12 serves as a coordination point for ATP; the sequence is GLSGSGKS. 57–60 is a binding site for GTP; it reads DVRS.

This sequence belongs to the RapZ-like family.

Functionally, displays ATPase and GTPase activities. This Xanthomonas axonopodis pv. citri (strain 306) protein is Nucleotide-binding protein XAC2976.